The sequence spans 347 residues: Ribosomal RNA small subunit methyltransferase H (347 aa).

S-adenosyl-L-methionine is bound by residues Gly-47–Tyr-49, Asp-64, Phe-91, Asp-114, and Gln-121. Residues Pro-291–Ser-347 are disordered.

It belongs to the methyltransferase superfamily. RsmH family.

It localises to the cytoplasm. The catalysed reaction is cytidine(1402) in 16S rRNA + S-adenosyl-L-methionine = N(4)-methylcytidine(1402) in 16S rRNA + S-adenosyl-L-homocysteine + H(+). Specifically methylates the N4 position of cytidine in position 1402 (C1402) of 16S rRNA. In Brucella anthropi (strain ATCC 49188 / DSM 6882 / CCUG 24695 / JCM 21032 / LMG 3331 / NBRC 15819 / NCTC 12168 / Alc 37) (Ochrobactrum anthropi), this protein is Ribosomal RNA small subunit methyltransferase H.